Consider the following 511-residue polypeptide: UDP-N-acetylmuramate--L-alanine ligase (511 aa).

127-133 (GTHGKTT) provides a ligand contact to ATP. A disordered region spans residues 481-511 (VGTVPGGEVGGATTIGGTVPGGSAPGASAAG). Positions 484–504 (VPGGEVGGATTIGGTVPGGSA) are enriched in gly residues.

Belongs to the MurCDEF family.

It is found in the cytoplasm. It catalyses the reaction UDP-N-acetyl-alpha-D-muramate + L-alanine + ATP = UDP-N-acetyl-alpha-D-muramoyl-L-alanine + ADP + phosphate + H(+). It participates in cell wall biogenesis; peptidoglycan biosynthesis. Its function is as follows. Cell wall formation. The protein is UDP-N-acetylmuramate--L-alanine ligase of Salinispora arenicola (strain CNS-205).